Here is an 85-residue protein sequence, read N- to C-terminus: HssA/B-like protein 59 (85 aa).

The protein belongs to the hssA/B family.

The sequence is that of HssA/B-like protein 59 (hssl59) from Dictyostelium discoideum (Social amoeba).